Consider the following 338-residue polypeptide: Lipoate-protein ligase A (338 aa).

One can recognise a BPL/LPL catalytic domain in the interval 29–216 (PTTQRVLFLW…AFFDYFGEQC (188 aa)). Residues arginine 71, 76–79 (GAVF), and lysine 134 contribute to the ATP site. Residue lysine 134 participates in (R)-lipoate binding.

Belongs to the LplA family. In terms of assembly, monomer.

It localises to the cytoplasm. It catalyses the reaction L-lysyl-[lipoyl-carrier protein] + (R)-lipoate + ATP = N(6)-[(R)-lipoyl]-L-lysyl-[lipoyl-carrier protein] + AMP + diphosphate + H(+). The protein operates within protein modification; protein lipoylation via exogenous pathway; protein N(6)-(lipoyl)lysine from lipoate: step 1/2. It functions in the pathway protein modification; protein lipoylation via exogenous pathway; protein N(6)-(lipoyl)lysine from lipoate: step 2/2. Catalyzes both the ATP-dependent activation of exogenously supplied lipoate to lipoyl-AMP and the transfer of the activated lipoyl onto the lipoyl domains of lipoate-dependent enzymes. This is Lipoate-protein ligase A from Pectobacterium carotovorum subsp. carotovorum (strain PC1).